The primary structure comprises 109 residues: ATP-dependent Clp protease adapter protein ClpS (109 aa).

The protein belongs to the ClpS family. As to quaternary structure, binds to the N-terminal domain of the chaperone ClpA.

In terms of biological role, involved in the modulation of the specificity of the ClpAP-mediated ATP-dependent protein degradation. The sequence is that of ATP-dependent Clp protease adapter protein ClpS from Lawsonia intracellularis (strain PHE/MN1-00).